A 259-amino-acid chain; its full sequence is Early E4 30 kDa protein (259 aa).

This sequence belongs to the adenoviridae E4 30 to 34 kDa protein family. As to quaternary structure, interacts with E1B-55k.

The protein resides in the host nucleus. It is found in the host cytoplasm. Plays a major role to prevent cellular inhibition of viral genome replication by nuclear bodies. Assembles an SCF-like E3 ubiquitin ligase complex based on the cellular proteins ELOB, ELOC, CUL5 and RBX1, in cooperation with viral E1B-55K. This viral RING-type ligase ubiquitinates cellular substrates prior to proteasomal degradation: p53/TP53, LIG4, MRE11-RAD50-NBS1 (MRN) complex, ITGA3, DAXX and BLM. This is Early E4 30 kDa protein from Canine adenovirus serotype 2 (strain Toronto A 26-61) (CAdV-2).